Reading from the N-terminus, the 179-residue chain is Translation initiation factor IF-3 (179 aa).

The protein belongs to the IF-3 family. As to quaternary structure, monomer.

The protein localises to the cytoplasm. IF-3 binds to the 30S ribosomal subunit and shifts the equilibrium between 70S ribosomes and their 50S and 30S subunits in favor of the free subunits, thus enhancing the availability of 30S subunits on which protein synthesis initiation begins. The polypeptide is Translation initiation factor IF-3 (Zymomonas mobilis subsp. mobilis (strain ATCC 31821 / ZM4 / CP4)).